Consider the following 320-residue polypeptide: Na(+)-translocating NADH-quinone reductase subunit C (320 aa).

A helical transmembrane segment spans residues 16–36 (WYIVSFILGLSLFAGVLLSTI). FMN phosphoryl threonine is present on threonine 285.

Belongs to the NqrC family. In terms of assembly, composed of six subunits; NqrA, NqrB, NqrC, NqrD, NqrE and NqrF. It depends on FMN as a cofactor.

It is found in the cell inner membrane. It carries out the reaction a ubiquinone + n Na(+)(in) + NADH + H(+) = a ubiquinol + n Na(+)(out) + NAD(+). Functionally, NQR complex catalyzes the reduction of ubiquinone-1 to ubiquinol by two successive reactions, coupled with the transport of Na(+) ions from the cytoplasm to the periplasm. NqrA to NqrE are probably involved in the second step, the conversion of ubisemiquinone to ubiquinol. In Chlamydia pneumoniae (Chlamydophila pneumoniae), this protein is Na(+)-translocating NADH-quinone reductase subunit C.